A 201-amino-acid polypeptide reads, in one-letter code: Ribosome maturation factor RimP (201 aa).

The protein belongs to the RimP family.

Its subcellular location is the cytoplasm. Its function is as follows. Required for maturation of 30S ribosomal subunits. The protein is Ribosome maturation factor RimP of Acidiphilium cryptum (strain JF-5).